A 282-amino-acid polypeptide reads, in one-letter code: Probable ribosomal RNA small subunit methyltransferase A (282 aa).

S-adenosyl-L-methionine-binding residues include histidine 24, leucine 26, glycine 51, glutamate 72, aspartate 100, and asparagine 115.

The protein belongs to the class I-like SAM-binding methyltransferase superfamily. rRNA adenine N(6)-methyltransferase family. RsmA subfamily.

It localises to the cytoplasm. In terms of biological role, specifically dimethylates two adjacent adenosines in the loop of a conserved hairpin near the 3'-end of 16S rRNA in the 30S particle. May play a critical role in biogenesis of 30S subunits. The polypeptide is Probable ribosomal RNA small subunit methyltransferase A (Halobacterium salinarum (strain ATCC 29341 / DSM 671 / R1)).